The chain runs to 320 residues: Transaldolase (320 aa).

Lysine 126 (schiff-base intermediate with substrate) is an active-site residue.

Belongs to the transaldolase family. Type 1 subfamily. In terms of assembly, homodimer.

The protein resides in the cytoplasm. It carries out the reaction D-sedoheptulose 7-phosphate + D-glyceraldehyde 3-phosphate = D-erythrose 4-phosphate + beta-D-fructose 6-phosphate. It functions in the pathway carbohydrate degradation; pentose phosphate pathway; D-glyceraldehyde 3-phosphate and beta-D-fructose 6-phosphate from D-ribose 5-phosphate and D-xylulose 5-phosphate (non-oxidative stage): step 2/3. Its function is as follows. Transaldolase is important for the balance of metabolites in the pentose-phosphate pathway. In Bordetella bronchiseptica (strain ATCC BAA-588 / NCTC 13252 / RB50) (Alcaligenes bronchisepticus), this protein is Transaldolase.